A 262-amino-acid chain; its full sequence is Small ribosomal subunit protein eS1y (262 aa).

Over residues 1–18 the composition is skewed to basic residues; the sequence is MAVGKNKRISKGRKGGKK. The tract at residues 1 to 21 is disordered; that stretch reads MAVGKNKRISKGRKGGKKKAV.

Belongs to the eukaryotic ribosomal protein eS1 family. In terms of assembly, component of the small ribosomal subunit. Mature ribosomes consist of a small (40S) and a large (60S) subunit. The 40S subunit contains about 33 different proteins and 1 molecule of RNA (18S). The 60S subunit contains about 49 different proteins and 3 molecules of RNA (25S, 5.8S and 5S).

The protein resides in the cytoplasm. The sequence is that of Small ribosomal subunit protein eS1y from Arabidopsis thaliana (Mouse-ear cress).